Here is a 143-residue protein sequence, read N- to C-terminus: Spliceosomal protein DIB1 (143 aa).

Ala2 is modified (N-acetylalanine).

Belongs to the DIM1 family. Component of the U4/U6-U5 tri-snRNP complex composed of the U4, U6 and U5 snRNAs and at least PRP3, PRP4, PRP6, PRP8, PRP18, PRP31, PRP38, SNU13, SNU23, SNU66, SNU114, SPP381, SMB1, SMD1, SMD2, SMD3, SMX2, SMX3, LSM2, LSM3, LSM4, LSM5, LSM6, LSM7, LSM8, BRR2 and DIB1.

The protein localises to the nucleus. In terms of biological role, essential role in pre-mRNA splicing. Also essential for entry into mitosis (G2/M progression) as well as for chromosome segregation during mitosis. This chain is Spliceosomal protein DIB1 (DIB1), found in Saccharomyces cerevisiae (strain ATCC 204508 / S288c) (Baker's yeast).